A 144-amino-acid chain; its full sequence is Large ribosomal subunit protein uL15 (144 aa).

The tract at residues 1-57 (MFLNTLRPGEGSKHAPKRVGRGIGSGLGKTGGRGHKGLKSRSGGSVKPGFEGGQMPL) is disordered. A compositionally biased stretch (gly residues) spans 21-31 (RGIGSGLGKTG).

The protein belongs to the universal ribosomal protein uL15 family. Part of the 50S ribosomal subunit.

Binds to the 23S rRNA. The sequence is that of Large ribosomal subunit protein uL15 from Marinomonas sp. (strain MWYL1).